The primary structure comprises 230 residues: Urease accessory protein UreF (230 aa).

Belongs to the UreF family. UreD, UreF and UreG form a complex that acts as a GTP-hydrolysis-dependent molecular chaperone, activating the urease apoprotein by helping to assemble the nickel containing metallocenter of UreC. The UreE protein probably delivers the nickel.

Its subcellular location is the cytoplasm. Required for maturation of urease via the functional incorporation of the urease nickel metallocenter. The chain is Urease accessory protein UreF from Cupriavidus metallidurans (strain ATCC 43123 / DSM 2839 / NBRC 102507 / CH34) (Ralstonia metallidurans).